We begin with the raw amino-acid sequence, 136 residues long: Crossover junction endodeoxyribonuclease Hjc (136 aa).

Mg(2+) is bound at residue Glu9. Residue Ser29 is part of the active site. Residues Asp38 and Glu51 each coordinate Mg(2+).

This sequence belongs to the Holliday junction resolvase Hjc family. In terms of assembly, homodimer. Mg(2+) serves as cofactor.

It catalyses the reaction Endonucleolytic cleavage at a junction such as a reciprocal single-stranded crossover between two homologous DNA duplexes (Holliday junction).. Functionally, a structure-specific endonuclease that resolves Holliday junction (HJ) intermediates during genetic recombination. Cleaves 4-way DNA junctions introducing paired nicks in opposing strands, leaving a 5'-terminal phosphate and a 3'-terminal hydroxyl group that are subsequently ligated to produce recombinant products. This Archaeoglobus fulgidus (strain ATCC 49558 / DSM 4304 / JCM 9628 / NBRC 100126 / VC-16) protein is Crossover junction endodeoxyribonuclease Hjc.